A 127-amino-acid polypeptide reads, in one-letter code: Glycine cleavage system H protein (127 aa).

A Lipoyl-binding domain is found at 22-104; that stretch reads KVRIGITHFA…YEKAWMIVVE (83 aa). Lys63 carries the N6-lipoyllysine modification.

The protein belongs to the GcvH family. As to quaternary structure, the glycine cleavage system is composed of four proteins: P, T, L and H. (R)-lipoate serves as cofactor.

The glycine cleavage system catalyzes the degradation of glycine. The H protein shuttles the methylamine group of glycine from the P protein to the T protein. In terms of biological role, is also involved in protein lipoylation via its role as an octanoyl/lipoyl carrier protein intermediate. This is Glycine cleavage system H protein from Bacillus pumilus (strain SAFR-032).